A 383-amino-acid chain; its full sequence is MYTFPEKGLSEDMVTDLLKEMRSRDCPYDRLLSTMCTRPHPVAVRAYSMFLETNLGDPGLFPGTAEIERRVVGILGSLLGCSDATGYVSTGGTESNIQAVRAARNSSGRRDGNIVVPRSAHFSFDKIADLLNLEVRKAELDESLRVDVGDVERLIDDRTVCLVGIAGTTEFGQVDPIGDLSELAIENGIPLHVDAAFGGFVLPFLEKDCMWDFRAEGVQSITIDPHKMGMSPIPAGGLIFRSSDPLRRLETETYYLTVSRQASLTGTRSGAAAAATYAVIMHLGIDGYRKVVRRCMDMTEHLVSEARAMGIEPVIEPVMNVVALRVDDPPGVRRALLERGWHVSMTREPKALRLILMPHMTDENLDLFLSDLEDVLISLRRGG.

The residue at position 227 (K227) is an N6-(pyridoxal phosphate)lysine.

The protein belongs to the group II decarboxylase family. MfnA subfamily. Pyridoxal 5'-phosphate is required as a cofactor.

It catalyses the reaction L-tyrosine + H(+) = tyramine + CO2. It carries out the reaction L-aspartate + H(+) = beta-alanine + CO2. The protein operates within cofactor biosynthesis; methanofuran biosynthesis. Its pathway is cofactor biosynthesis; coenzyme A biosynthesis. Functionally, catalyzes the decarboxylation of L-tyrosine to produce tyramine for methanofuran biosynthesis. Can also catalyze the decarboxylation of L-aspartate to produce beta-alanine for coenzyme A (CoA) biosynthesis. In Methanothrix thermoacetophila (strain DSM 6194 / JCM 14653 / NBRC 101360 / PT) (Methanosaeta thermophila), this protein is Probable L-tyrosine/L-aspartate decarboxylase.